Consider the following 688-residue polypeptide: Elongation factor G (688 aa).

Residues 8–282 (EKTRNIGIIA…AIVDYLPAPC (275 aa)) form the tr-type G domain. GTP is bound by residues 17–24 (AHIDAGKT), 81–85 (DTPGH), and 135–138 (NKMD).

Belongs to the TRAFAC class translation factor GTPase superfamily. Classic translation factor GTPase family. EF-G/EF-2 subfamily.

The protein resides in the cytoplasm. Its function is as follows. Catalyzes the GTP-dependent ribosomal translocation step during translation elongation. During this step, the ribosome changes from the pre-translocational (PRE) to the post-translocational (POST) state as the newly formed A-site-bound peptidyl-tRNA and P-site-bound deacylated tRNA move to the P and E sites, respectively. Catalyzes the coordinated movement of the two tRNA molecules, the mRNA and conformational changes in the ribosome. This chain is Elongation factor G, found in Onion yellows phytoplasma (strain OY-M).